Consider the following 192-residue polypeptide: UPF0316 protein SSP0880 (192 aa).

The next 3 helical transmembrane spans lie at 8–28 (PWLM…CLTM), 40–60 (VAAI…GMVM), and 66–86 (IQNV…GMKI).

It belongs to the UPF0316 family.

Its subcellular location is the cell membrane. The protein is UPF0316 protein SSP0880 of Staphylococcus saprophyticus subsp. saprophyticus (strain ATCC 15305 / DSM 20229 / NCIMB 8711 / NCTC 7292 / S-41).